We begin with the raw amino-acid sequence, 361 residues long: UDP-N-acetylglucosamine--N-acetylmuramyl-(pentapeptide) pyrophosphoryl-undecaprenol N-acetylglucosamine transferase (361 aa).

Residues 12–14 (TGG), Asn-124, Arg-163, Ser-189, Ile-241, 260–265 (ALTVSE), and Gln-286 each bind UDP-N-acetyl-alpha-D-glucosamine.

The protein belongs to the glycosyltransferase 28 family. MurG subfamily.

It is found in the cell inner membrane. The enzyme catalyses di-trans,octa-cis-undecaprenyl diphospho-N-acetyl-alpha-D-muramoyl-L-alanyl-D-glutamyl-meso-2,6-diaminopimeloyl-D-alanyl-D-alanine + UDP-N-acetyl-alpha-D-glucosamine = di-trans,octa-cis-undecaprenyl diphospho-[N-acetyl-alpha-D-glucosaminyl-(1-&gt;4)]-N-acetyl-alpha-D-muramoyl-L-alanyl-D-glutamyl-meso-2,6-diaminopimeloyl-D-alanyl-D-alanine + UDP + H(+). The protein operates within cell wall biogenesis; peptidoglycan biosynthesis. Cell wall formation. Catalyzes the transfer of a GlcNAc subunit on undecaprenyl-pyrophosphoryl-MurNAc-pentapeptide (lipid intermediate I) to form undecaprenyl-pyrophosphoryl-MurNAc-(pentapeptide)GlcNAc (lipid intermediate II). The chain is UDP-N-acetylglucosamine--N-acetylmuramyl-(pentapeptide) pyrophosphoryl-undecaprenol N-acetylglucosamine transferase from Aeromonas hydrophila subsp. hydrophila (strain ATCC 7966 / DSM 30187 / BCRC 13018 / CCUG 14551 / JCM 1027 / KCTC 2358 / NCIMB 9240 / NCTC 8049).